A 330-amino-acid polypeptide reads, in one-letter code: G-protein coupled bile acid receptor 1 (330 aa).

The Extracellular segment spans residues 1–19 (MTPNSTGEVPSPIPKGALG). N-linked (GlcNAc...) asparagine glycosylation occurs at Asn-4. A helical membrane pass occupies residues 20 to 40 (LSLALASLIITANLLLALGIA). At 41 to 50 (WDRRLRSPPA) the chain is on the cytoplasmic side. A helical transmembrane segment spans residues 51–71 (GCFFLSLLLAGLLTGLALPTL). Over 72 to 85 (PGLWNQSRRGYWSC) the chain is Extracellular. An N-linked (GlcNAc...) asparagine glycan is attached at Asn-76. Cys-85 and Cys-155 are disulfide-bonded. A helical transmembrane segment spans residues 86 to 106 (LLVYLAPNFSFLSLLANLLLV). The Cytoplasmic segment spans residues 107-125 (HGERYMAVLRPLQPPGSIR). The chain crosses the membrane as a helical span at residues 126–146 (LALLLTWAGPLLFASLPALGW). Residues 147–165 (NHWTPGANCSSQAIFPAPY) are Extracellular-facing. Residues 166-186 (LYLEVYGLLLPAVGAAAFLSV) form a helical membrane-spanning segment. Topologically, residues 187-228 (RVLATAHRQLQDICRLERAVCRDEPSALARALTWRQARAQAG) are cytoplasmic. Residues 229-249 (AMLLFGLCWGPYVATLLLSVL) traverse the membrane as a helical segment. The Extracellular segment spans residues 250–261 (AYEQRPPLGPGT). A helical transmembrane segment spans residues 262 to 282 (LLSLLSLGSASAAAVPVAMGL). The Cytoplasmic portion of the chain corresponds to 283–330 (GDQRYTAPWRAAAQRCLQGLWGRASRDSPGPSIAYHPSSQSSVDLDLN). The segment at 309–330 (DSPGPSIAYHPSSQSSVDLDLN) is disordered. Polar residues predominate over residues 319-330 (PSSQSSVDLDLN).

It belongs to the G-protein coupled receptor 1 family. Ubiquitously expressed. Expressed at higher level in spleen and placenta. Expressed at lower level in other tissues. In digestive tissues, it is expressed in stomach, duodenum, ileocecum, ileum, jejunum, ascending colon, transverse colon, descending colon, cecum and liver, but not in esophagus and rectum.

The protein resides in the cell membrane. Receptor for bile acid. Bile acid-binding induces its internalization, activation of extracellular signal-regulated kinase and intracellular cAMP production. May be involved in the suppression of macrophage functions by bile acids. This chain is G-protein coupled bile acid receptor 1 (GPBAR1), found in Homo sapiens (Human).